The primary structure comprises 473 residues: Lactate utilization protein B 2 (473 aa).

4Fe-4S ferredoxin-type domains lie at Gly302–Tyr332 and Tyr351–Leu380. Residues Cys311, Cys314, Cys317, Cys321, Cys364, Cys367, and Cys371 each contribute to the [4Fe-4S] cluster site.

The protein belongs to the LutB/YkgF family.

In terms of biological role, is involved in L-lactate degradation and allows cells to grow with lactate as the sole carbon source. Has probably a role as an electron transporter during oxidation of L-lactate. In Bacillus mycoides (strain KBAB4) (Bacillus weihenstephanensis), this protein is Lactate utilization protein B 2.